The following is a 404-amino-acid chain: NADH-quinone oxidoreductase subunit D 2 (404 aa).

This sequence belongs to the complex I 49 kDa subunit family. NDH-1 is composed of 14 different subunits. Subunits NuoB, C, D, E, F, and G constitute the peripheral sector of the complex.

Its subcellular location is the cell inner membrane. It carries out the reaction a quinone + NADH + 5 H(+)(in) = a quinol + NAD(+) + 4 H(+)(out). Its function is as follows. NDH-1 shuttles electrons from NADH, via FMN and iron-sulfur (Fe-S) centers, to quinones in the respiratory chain. The immediate electron acceptor for the enzyme in this species is believed to be ubiquinone. Couples the redox reaction to proton translocation (for every two electrons transferred, four hydrogen ions are translocated across the cytoplasmic membrane), and thus conserves the redox energy in a proton gradient. In Rhizobium meliloti (strain 1021) (Ensifer meliloti), this protein is NADH-quinone oxidoreductase subunit D 2.